A 140-amino-acid polypeptide reads, in one-letter code: Nucleoside diphosphate kinase (140 aa).

ATP is bound by residues K11, F59, R87, T93, R104, and N114. H117 functions as the Pros-phosphohistidine intermediate in the catalytic mechanism.

It belongs to the NDK family. As to quaternary structure, homotetramer. Requires Mg(2+) as cofactor.

Its subcellular location is the cytoplasm. The enzyme catalyses a 2'-deoxyribonucleoside 5'-diphosphate + ATP = a 2'-deoxyribonucleoside 5'-triphosphate + ADP. It catalyses the reaction a ribonucleoside 5'-diphosphate + ATP = a ribonucleoside 5'-triphosphate + ADP. Major role in the synthesis of nucleoside triphosphates other than ATP. The ATP gamma phosphate is transferred to the NDP beta phosphate via a ping-pong mechanism, using a phosphorylated active-site intermediate. This Azorhizobium caulinodans (strain ATCC 43989 / DSM 5975 / JCM 20966 / LMG 6465 / NBRC 14845 / NCIMB 13405 / ORS 571) protein is Nucleoside diphosphate kinase.